The primary structure comprises 193 residues: Putative manganese efflux pump MntP (193 aa).

6 consecutive transmembrane segments (helical) span residues 3–23, 39–59, 65–85, 113–133, 138–158, and 173–193; these read LATL…AALG, VGAY…ALGL, IAAF…GHMV, LALA…GLAV, ILMA…GGVL, and VLGG…HLSA.

Belongs to the MntP (TC 9.B.29) family.

Its subcellular location is the cell inner membrane. Functionally, probably functions as a manganese efflux pump. The polypeptide is Putative manganese efflux pump MntP (Rhodospirillum rubrum (strain ATCC 11170 / ATH 1.1.1 / DSM 467 / LMG 4362 / NCIMB 8255 / S1)).